The primary structure comprises 154 residues: S-ribosylhomocysteine lyase (154 aa).

Fe cation contacts are provided by His-57, His-61, and Cys-124.

The protein belongs to the LuxS family. Homodimer. It depends on Fe cation as a cofactor.

It carries out the reaction S-(5-deoxy-D-ribos-5-yl)-L-homocysteine = (S)-4,5-dihydroxypentane-2,3-dione + L-homocysteine. In terms of biological role, involved in the synthesis of autoinducer 2 (AI-2) which is secreted by bacteria and is used to communicate both the cell density and the metabolic potential of the environment. The regulation of gene expression in response to changes in cell density is called quorum sensing. Catalyzes the transformation of S-ribosylhomocysteine (RHC) to homocysteine (HC) and 4,5-dihydroxy-2,3-pentadione (DPD). The sequence is that of S-ribosylhomocysteine lyase from Exiguobacterium sibiricum (strain DSM 17290 / CCUG 55495 / CIP 109462 / JCM 13490 / 255-15).